We begin with the raw amino-acid sequence, 502 residues long: MWTADEIALLCYEHYGIRLPKKGKPEPNHEWTLLAAVVKIQSPADQDCDTPDKPAQVTKEVVSMGTGTKCIGQSKMRKSGDILNDSHAEVIARRNFQRYLLHQLQLAATLKEDSIFVPGTQKGLWKLRRDLFFVFFSSHTPCGDASIIPMLEFEDQPCCPVIRDWASSSSVEASSNLEAPGNERKCEDLDSPVTKKMRLEPMTAAREVTNGATHHQSFGKQESGPISPGINSCNLTVEGLAAVTRIAPGSAKVIDVYRTGAKCVPGEAGDSRKPGAAFHQVGLLRVKPGRGDRTRSMSCSDKMARWNVLGCQGALLMHFLEEPIYLSAVVIGKCPYSQEAMQRALTGRRQNVSALPKGFGVQELKILQSDLLFEQSRCAVQAKRADSPGRLVPCGAAISWSAVPEQPLDVTANGFPQGTTKKTIGSLQARSQISKVELLRSFQKLLSRIARDKWPDSLRVQKLDTYQDYKEAASSYQEAWSTLRKQAFGSWIRNPPDYHQFK.

The region spanning 63-501 (SMGTGTKCIG…IRNPPDYHQF (439 aa)) is the A to I editase domain. His-87 contacts Zn(2+). The Proton donor role is filled by Glu-89. Arg-93 and Arg-94 together coordinate 1D-myo-inositol hexakisphosphate. Residue Cys-142 participates in Zn(2+) binding. A Phosphoserine modification is found at Ser-191. Cys-299 is a binding site for Zn(2+). Residues Lys-302, Arg-305, Lys-435, and Lys-470 each coordinate 1D-myo-inositol hexakisphosphate.

This sequence belongs to the ADAT1 family. It depends on 1D-myo-inositol hexakisphosphate as a cofactor.

The catalysed reaction is adenosine(37) in tRNA(Ala) + H2O + H(+) = inosine(37) in tRNA(Ala) + NH4(+). Its function is as follows. Specifically deaminates adenosine-37 to inosine in tRNA-Ala. The sequence is that of tRNA-specific adenosine deaminase 1 (ADAT1) from Macaca fascicularis (Crab-eating macaque).